The chain runs to 315 residues: Methionine import ATP-binding protein MetN (315 aa).

An ABC transporter domain is found at 2–219; the sequence is IEIEKVCVDF…PQHAFTQQLV (218 aa). 16–23 contacts ATP; that stretch reads GTSGAGKS.

It belongs to the ABC transporter superfamily. Methionine importer (TC 3.A.1.24) family. The complex is composed of two ATP-binding proteins (MetN), two transmembrane proteins (MetI) and a solute-binding protein (MetQ).

The protein localises to the cell inner membrane. It carries out the reaction L-methionine(out) + ATP + H2O = L-methionine(in) + ADP + phosphate + H(+). It catalyses the reaction D-methionine(out) + ATP + H2O = D-methionine(in) + ADP + phosphate + H(+). In terms of biological role, part of the ABC transporter complex MetNIQ involved in methionine import. Responsible for energy coupling to the transport system. This chain is Methionine import ATP-binding protein MetN, found in Salmonella enteritidis.